A 131-amino-acid chain; its full sequence is UPF0102 protein H16_A3579 (131 aa).

Belongs to the UPF0102 family.

This Cupriavidus necator (strain ATCC 17699 / DSM 428 / KCTC 22496 / NCIMB 10442 / H16 / Stanier 337) (Ralstonia eutropha) protein is UPF0102 protein H16_A3579.